We begin with the raw amino-acid sequence, 99 residues long: N(2)-fixation sustaining protein CowN (99 aa).

The protein belongs to the CowN family.

Its function is as follows. Is required to sustain N(2)-dependent growth in the presence of low levels of carbon monoxide (CO). Probably acts by protecting the N(2) fixation ability of the nitrogenase complex, which is inactivated in the presence of CO. The polypeptide is N(2)-fixation sustaining protein CowN (Magnetococcus marinus (strain ATCC BAA-1437 / JCM 17883 / MC-1)).